The sequence spans 189 residues: HGPRTase-like protein 2 (189 aa).

It belongs to the purine/pyrimidine phosphoribosyltransferase family. Archaeal HPRT subfamily.

May catalyze a purine salvage reaction, the substrate is unknown. This Haloarcula marismortui (strain ATCC 43049 / DSM 3752 / JCM 8966 / VKM B-1809) (Halobacterium marismortui) protein is HGPRTase-like protein 2.